A 128-amino-acid polypeptide reads, in one-letter code: MLALLRPYLSTRVLCVLVVCFSALMLVAFIPTLFRNDTALQIRASRQGTTLPDGFYVYQRLNAEGIRIKSITPDNDSLVIRFDTEEQSMAAEKVLHQLLPYGFDIGQMDPSGSSQLMNRLSLRKQSVG.

Over 1–13 (MLALLRPYLSTRV) the chain is Cytoplasmic. A helical membrane pass occupies residues 14–34 (LCVLVVCFSALMLVAFIPTLF). Over 35 to 128 (RNDTALQIRA…RLSLRKQSVG (94 aa)) the chain is Periplasmic.

This sequence belongs to the MzrA family. Interacts with EnvZ.

It localises to the cell inner membrane. Its function is as follows. Modulates the activity of the EnvZ/OmpR two-component regulatory system, probably by directly modulating EnvZ enzymatic activity and increasing stability of phosphorylated OmpR. The polypeptide is Modulator protein MzrA (Erwinia billingiae (strain Eb661)).